The sequence spans 547 residues: Serine beta-lactamase-like protein LACTB, mitochondrial (547 aa).

A mitochondrion-targeting transit peptide spans methionine 1–leucine 115. Positions glycine 62–proline 83 are enriched in low complexity. The interval glycine 62–proline 96 is disordered. Residue serine 164 is the Acyl-ester intermediate of the active site. Lysine 283 and lysine 284 each carry N6-succinyllysine. N6-acetyllysine occurs at positions 297 and 342.

It belongs to the peptidase S12 family. As to expression, expressed predominantly in skeletal muscle.

Its subcellular location is the mitochondrion. In terms of biological role, mitochondrial serine protease that acts as a regulator of mitochondrial lipid metabolism. Acts by decreasing protein levels of PISD, a mitochondrial enzyme that converts phosphatidylserine (PtdSer) to phosphatidylethanolamine (PtdEtn), thereby affecting mitochondrial lipid metabolism. It is unclear whether it acts directly by mediating proteolysis of PISD or by mediating proteolysis of another lipid metabolism protein. Acts as a tumor suppressor that has the ability to inhibit proliferation of multiple types of breast cancer cells: probably by promoting decreased levels of PISD, thereby affecting mitochondrial lipid metabolism. The chain is Serine beta-lactamase-like protein LACTB, mitochondrial from Homo sapiens (Human).